The primary structure comprises 659 residues: RNA polymerase II subunit A C-terminal domain phosphatase (659 aa).

One can recognise an FCP1 homology domain in the interval 139-303; that stretch reads ITNRKLVLLV…KNSKEQMPVQ (165 aa). The BRCT domain maps to 351 to 443; it reads ERHKVLDGCV…LKADENLFQL (93 aa). Residues 484–504 show a composition bias toward acidic residues; sequence ALSDDEDDGDNEDEDDDGNDV. A disordered region spans residues 484–640; sequence ALSDDEDDGD…PESDDDDEFE (157 aa). Basic and acidic residues predominate over residues 505–519; that stretch reads GEDKGDENLEEKQEK. Polar residues predominate over residues 529–538; it reads QNGSVENQSG. Acidic residues-rich tracts occupy residues 560-576, 596-607, and 616-640; these read MEDE…DDDT, ENEDDAVFDVDD, and IDEE…DEFE.

The protein localises to the nucleus. The catalysed reaction is O-phospho-L-seryl-[protein] + H2O = L-seryl-[protein] + phosphate. The enzyme catalyses O-phospho-L-threonyl-[protein] + H2O = L-threonyl-[protein] + phosphate. During the late stages of oogenesis, dephosphorylates 'Ser-5' of the heptad repeats YSPTSPS in the C-terminal domain of the largest RNA polymerase II subunit ama-1. Similarly, dephosphorylates 'Ser-5' of ama-1 in early embryonic cells prior to the activation of the zygotic transcription program at the 4-cell embryonic stage. May dephosphorylate 'Ser-2' of the ama-1 heptad repeats YSPTSPS in embryonic somatic and germline cells. This is RNA polymerase II subunit A C-terminal domain phosphatase from Caenorhabditis elegans.